Here is a 334-residue protein sequence, read N- to C-terminus: Aspartate carbamoyltransferase catalytic subunit (334 aa).

Carbamoyl phosphate contacts are provided by Arg70 and Thr71. Residue Lys98 coordinates L-aspartate. Arg120, His150, and Gln153 together coordinate carbamoyl phosphate. L-aspartate is bound by residues Arg183 and Arg239. Carbamoyl phosphate is bound by residues Gly280 and Pro281.

This sequence belongs to the aspartate/ornithine carbamoyltransferase superfamily. ATCase family. In terms of assembly, heterododecamer (2C3:3R2) of six catalytic PyrB chains organized as two trimers (C3), and six regulatory PyrI chains organized as three dimers (R2).

It catalyses the reaction carbamoyl phosphate + L-aspartate = N-carbamoyl-L-aspartate + phosphate + H(+). The protein operates within pyrimidine metabolism; UMP biosynthesis via de novo pathway; (S)-dihydroorotate from bicarbonate: step 2/3. Functionally, catalyzes the condensation of carbamoyl phosphate and aspartate to form carbamoyl aspartate and inorganic phosphate, the committed step in the de novo pyrimidine nucleotide biosynthesis pathway. The protein is Aspartate carbamoyltransferase catalytic subunit of Pseudomonas aeruginosa (strain LESB58).